A 208-amino-acid chain; its full sequence is High frequency lysogenization protein HflD homolog (208 aa).

It belongs to the HflD family.

The protein localises to the cytoplasm. It localises to the cell inner membrane. This chain is High frequency lysogenization protein HflD homolog, found in Pseudomonas putida (strain ATCC 700007 / DSM 6899 / JCM 31910 / BCRC 17059 / LMG 24140 / F1).